A 577-amino-acid polypeptide reads, in one-letter code: Protein GPR108 (577 aa).

An N-terminal signal peptide occupies residues 1-34 (MAVSERRGLSGESPAQCRWEYLSLLVLMLSGCSG). Residues Asn59 and Asn111 are each glycosylated (N-linked (GlcNAc...) asparagine). The disordered stretch occupies residues 144 to 224 (LLPEAPSQSG…TRGPSGKEKD (81 aa)). Asn233 and Asn237 each carry an N-linked (GlcNAc...) asparagine glycan. Helical transmembrane passes span 296 to 316 (LYLI…SVLC), 325 to 345 (IHWL…FHSI), 369 to 389 (LLKG…WAFV), 400 to 420 (IFGI…VIES), 434 to 454 (ILFL…VWSI), 482 to 502 (VMVI…RVAV), and 506 to 526 (WQWL…VLTG).

This sequence belongs to the LU7TM family.

Its subcellular location is the golgi apparatus. The protein localises to the cis-Golgi network membrane. The protein resides in the trans-Golgi network membrane. It is found in the golgi apparatus membrane. Its function is as follows. May play a role in intracellular immune modulation by activating NF-kappaB response and attenuating Toll-like-receptor response. The sequence is that of Protein GPR108 (Gpr108) from Rattus norvegicus (Rat).